We begin with the raw amino-acid sequence, 102 residues long: Large ribosomal subunit protein uL24 (102 aa).

The protein belongs to the universal ribosomal protein uL24 family. Part of the 50S ribosomal subunit.

Its function is as follows. One of two assembly initiator proteins, it binds directly to the 5'-end of the 23S rRNA, where it nucleates assembly of the 50S subunit. One of the proteins that surrounds the polypeptide exit tunnel on the outside of the subunit. In Alkaliphilus oremlandii (strain OhILAs) (Clostridium oremlandii (strain OhILAs)), this protein is Large ribosomal subunit protein uL24.